A 213-amino-acid chain; its full sequence is Orotate phosphoribosyltransferase (213 aa).

Residue Lys-26 coordinates 5-phospho-alpha-D-ribose 1-diphosphate. 34–35 (FF) is an orotate binding site. Residues 72–73 (YK), Arg-99, Lys-100, Lys-103, His-105, and 124–132 (DDVITAGTA) contribute to the 5-phospho-alpha-D-ribose 1-diphosphate site. Thr-128 and Arg-156 together coordinate orotate.

The protein belongs to the purine/pyrimidine phosphoribosyltransferase family. PyrE subfamily. As to quaternary structure, homodimer. Requires Mg(2+) as cofactor.

It catalyses the reaction orotidine 5'-phosphate + diphosphate = orotate + 5-phospho-alpha-D-ribose 1-diphosphate. The protein operates within pyrimidine metabolism; UMP biosynthesis via de novo pathway; UMP from orotate: step 1/2. Functionally, catalyzes the transfer of a ribosyl phosphate group from 5-phosphoribose 1-diphosphate to orotate, leading to the formation of orotidine monophosphate (OMP). The sequence is that of Orotate phosphoribosyltransferase from Enterobacter sp. (strain 638).